We begin with the raw amino-acid sequence, 382 residues long: Succinyl-diaminopimelate desuccinylase (382 aa).

A Zn(2+)-binding site is contributed by His-73. Asp-75 is a catalytic residue. Asp-106 serves as a coordination point for Zn(2+). Glu-140 (proton acceptor) is an active-site residue. Zn(2+) contacts are provided by Glu-141, Glu-169, and His-355.

Belongs to the peptidase M20A family. DapE subfamily. In terms of assembly, homodimer. Zn(2+) serves as cofactor. The cofactor is Co(2+).

The catalysed reaction is N-succinyl-(2S,6S)-2,6-diaminopimelate + H2O = (2S,6S)-2,6-diaminopimelate + succinate. It functions in the pathway amino-acid biosynthesis; L-lysine biosynthesis via DAP pathway; LL-2,6-diaminopimelate from (S)-tetrahydrodipicolinate (succinylase route): step 3/3. Its function is as follows. Catalyzes the hydrolysis of N-succinyl-L,L-diaminopimelic acid (SDAP), forming succinate and LL-2,6-diaminopimelate (DAP), an intermediate involved in the bacterial biosynthesis of lysine and meso-diaminopimelic acid, an essential component of bacterial cell walls. The protein is Succinyl-diaminopimelate desuccinylase of Cellvibrio japonicus (strain Ueda107) (Pseudomonas fluorescens subsp. cellulosa).